Consider the following 182-residue polypeptide: Probable RNA 2'-phosphotransferase (182 aa).

This sequence belongs to the KptA/TPT1 family.

In terms of biological role, removes the 2'-phosphate from RNA via an intermediate in which the phosphate is ADP-ribosylated by NAD followed by a presumed transesterification to release the RNA and generate ADP-ribose 1''-2''-cyclic phosphate (APPR&gt;P). May function as an ADP-ribosylase. The chain is Probable RNA 2'-phosphotransferase from Pseudomonas aeruginosa (strain UCBPP-PA14).